A 621-amino-acid chain; its full sequence is Chaperone protein HscA homolog (621 aa).

The protein belongs to the heat shock protein 70 family.

In terms of biological role, chaperone involved in the maturation of iron-sulfur cluster-containing proteins. Has a low intrinsic ATPase activity which is markedly stimulated by HscB. The chain is Chaperone protein HscA homolog from Cupriavidus necator (strain ATCC 17699 / DSM 428 / KCTC 22496 / NCIMB 10442 / H16 / Stanier 337) (Ralstonia eutropha).